Reading from the N-terminus, the 324-residue chain is Probable UDP-sugar transporter protein SLC35A4 (324 aa).

The Cytoplasmic portion of the chain corresponds to 1 to 18 (MSVEDGGLPGLGGPGQAR). Residues 19–39 (WTLMLLLSTATYGAHAPLLAL) form a helical membrane-spanning segment. The Lumenal portion of the chain corresponds to 40–52 (CHVDGRVPFRPSS). The helical transmembrane segment at 53-73 (AVLLTELTKLLLCALSLLVGW) threads the bilayer. Over 74 to 85 (QAWPPRTPPWRQ) the chain is Cytoplasmic. A helical membrane pass occupies residues 86-106 (AAPFALSALLYGANNNLVIHL). Residues 107–140 (QHYMDPSTYQVLSNLKIGSTALFYCLCLRRRLSA) are Lumenal-facing. Residues 141–161 (RQGLALLLLMAAGACYAAGGL) traverse the membrane as a helical segment. Residues 162–177 (RDPGSPLPESPSTAAS) lie on the Cytoplasmic side of the membrane. A helical transmembrane segment spans residues 178–198 (GPVPLHVTAPGLLLLLLYCLI). Topologically, residues 199–214 (SGLSSVYTELLLKRQR) are lumenal. The helical transmembrane segment at 215 to 235 (LPLALQNLFLYTFGVLLNLGL) threads the bilayer. Residues 236 to 248 (HAGGGPGPGLLEG) lie on the Cytoplasmic side of the membrane. A helical transmembrane segment spans residues 249 to 271 (FSGWAALVVLSQALNGLLMSAVM). Topologically, residues 272 to 279 (KHGSSITR) are lumenal. The helical transmembrane segment at 280 to 300 (LFVVSCSLVVNAVLSAALLRL) threads the bilayer. Residues 301–324 (QLTAAFFLAALLIGLAVHLYYGSR) lie on the Cytoplasmic side of the membrane.

Belongs to the nucleotide-sugar transporter family. SLC35A subfamily. In terms of assembly, found in a complex with SLC35A2 and SLC35A3.

It is found in the golgi apparatus membrane. It catalyses the reaction CDP-L-ribitol(in) + CDP(out) = CDP-L-ribitol(out) + CDP(in). Functionally, mediates the transport of CDP-ribitol. Does not exhibit CMP-sialic acid, UDP-galactose and UDP-N-acetylglucosamine transport activity. The protein is Probable UDP-sugar transporter protein SLC35A4 of Sus scrofa (Pig).